The chain runs to 885 residues: MNGSPYSSSSWVKSSLSTNSLGSLSNSYAAGSAGGSGNRSTVRGDSNKDQKLLGYLQKQSKSQLPNSNVKIFKKKWFWFESDSGTLFYSATSTGALSTPLTPSSLSENIKSIKITSQTTIEQSISFRLELIIKDKVPNDEFTVLNWVNTLNQWKKLNCNLDFTNDTTTTTNNSNNSNSNNNNKQYNSIENPDYLGKFGEVEGLLNAMSVSTSLNTMKTVKPLINKIQNDSEQLKLVLSQVEQQIEFLKSCQLELISHLSNDNNNNNNNNNNNNNILQILQQQQPISSKRTVSNDNLVGSNNSNNQLSLSIGLPINLNTSNTTTTTITNNTIEGENDDDEEEDEINQTSDIFSLLPTHLTLYVFSYLEPKELLILAQVSSQWQKLAGDNLLWVRFVTHFITPASIFDKSHNWKSVYLANTVTSLGYCSNYYYLKNQQKGGICTNKEKYMNRAISMYGVTPLTSLSSSKEGWLYKRGDDLLRIWKKRYFVLRDSSLFYFKHQNDNFPCGVILLNHGTKLKRASASTRKNCFKILQSKNSTITMVHKKRMPYYLSTDKEDDCNDWMILLNSIIKSNTQHQNNYGVITISGTSNNNNNNVYINNNNNNNNNNNNNNNNNNNNNNNNGSQSYNLPPLLSKSPSFSNALTSSTGISGGGGGSTKSRKSHKKSFSSGGGGSGGNNNFEQMQQQIQSVHLTPIYPMFGVALSKILENQSLITTQTHLKIPFILYICLNYIISKGIKEEGIFRVSGSLREVQELQEHFEQGREIDLDQHDIHAICGLVKTFFRKLPHTLVAADLDEYSTSVQLAASQTEDEKIQEFKFIFESISENSFHIFELLLYCLRLIVRNESFNKMTIENLLIVIMPTLKCSPVLITNGIKYYDEIFIKK.

The segment covering 168–182 (TTTNNSNNSNSNNNN) has biased composition (low complexity). Positions 168-187 (TTTNNSNNSNSNNNNKQYNS) are disordered. Positions 222–249 (LINKIQNDSEQLKLVLSQVEQQIEFLKS) form a coiled coil. In terms of domain architecture, F-box spans 348–394 (SDIFSLLPTHLTLYVFSYLEPKELLILAQVSSQWQKLAGDNLLWVRF). Positions 464-571 (SSSKEGWLYK…WMILLNSIIK (108 aa)) constitute a PH domain. Low complexity-rich tracts occupy residues 594-622 (NNVY…NNNN) and 629-648 (LPPL…SSTG). The interval 594–680 (NNVYINNNNN…GGGSGGNNNF (87 aa)) is disordered. The 185-residue stretch at 701–885 (VALSKILENQ…KYYDEIFIKK (185 aa)) folds into the Rho-GAP domain.

Its subcellular location is the cytoplasm. Functionally, rho GTPase-activating protein involved in the signal transduction pathway. In Dictyostelium discoideum (Social amoeba), this protein is Rho GTPase-activating protein gacFF (gacFF).